The sequence spans 398 residues: Proteasome-activating nucleotidase (398 aa).

Residues 3 to 60 (DSEIQYLLEKLKKLEEDYYKLRELYRRLEDEKKFIESERIRYEREVRRLRSEVERLRS) adopt a coiled-coil conformation. Residues 185–190 (GTGKTL) and H324 contribute to the ATP site. Positions 396-398 (MFV) are docks into pockets in the proteasome alpha-ring to cause gate opening.

This sequence belongs to the AAA ATPase family. Homohexamer. The hexameric complex has a two-ring architecture resembling a top hat that caps the 20S proteasome core at one or both ends. Upon ATP-binding, the C-terminus of PAN interacts with the alpha-rings of the proteasome core by binding to the intersubunit pockets.

It is found in the cytoplasm. In terms of biological role, ATPase which is responsible for recognizing, binding, unfolding and translocation of substrate proteins into the archaeal 20S proteasome core particle. Is essential for opening the gate of the 20S proteasome via an interaction with its C-terminus, thereby allowing substrate entry and access to the site of proteolysis. Thus, the C-termini of the proteasomal ATPase function like a 'key in a lock' to induce gate opening and therefore regulate proteolysis. Unfolding activity requires energy from ATP hydrolysis, whereas ATP binding alone promotes ATPase-20S proteasome association which triggers gate opening, and supports translocation of unfolded substrates. The chain is Proteasome-activating nucleotidase from Archaeoglobus fulgidus (strain ATCC 49558 / DSM 4304 / JCM 9628 / NBRC 100126 / VC-16).